The sequence spans 1571 residues: Pentafunctional AROM polypeptide 2 (1571 aa).

The 3-dehydroquinate synthase stretch occupies residues 1–380; the sequence is MAEPTKISIL…YEPKASVVSN (380 aa). Residues 44 to 46, 81 to 84, 112 to 114, and aspartate 117 each bind NAD(+); these read DTN, ENSK, and GGV. Arginine 128 contributes to the 7-phospho-2-dehydro-3-deoxy-D-arabino-heptonate binding site. NAD(+) is bound at residue 137–138; that stretch reads TT. 7-phospho-2-dehydro-3-deoxy-D-arabino-heptonate contacts are provided by aspartate 144 and lysine 150. NAD(+) is bound at residue lysine 159. Asparagine 160 contributes to the 7-phospho-2-dehydro-3-deoxy-D-arabino-heptonate binding site. Residues 177-180 and asparagine 188 each bind NAD(+); that span reads FIDT. Zn(2+) is bound at residue glutamate 192. 7-phospho-2-dehydro-3-deoxy-D-arabino-heptonate-binding positions include 192–195 and lysine 246; that span reads EVIK. Glutamate 256 acts as the Proton acceptor; for 3-dehydroquinate synthase activity in catalysis. 7-phospho-2-dehydro-3-deoxy-D-arabino-heptonate is bound by residues 260-264 and histidine 267; that span reads RNLLN. Position 267 (histidine 267) interacts with Zn(2+). Histidine 271 (proton acceptor; for 3-dehydroquinate synthase activity) is an active-site residue. Histidine 283 and lysine 352 together coordinate 7-phospho-2-dehydro-3-deoxy-D-arabino-heptonate. Histidine 283 is a binding site for Zn(2+). Positions 393 to 838 are EPSP synthase; it reads VIPGVPKNLN…WDALKQKFGV (446 aa). The For EPSP synthase activity role is filled by cysteine 820. The tract at residues 859 to 1051 is shikimate kinase; it reads NASIIIIGMR…RKKHLSFFVS (193 aa). Position 866–873 (866–873) interacts with ATP; it reads GMRGAGKT. The 3-dehydroquinase stretch occupies residues 1052–1273; sequence LTLPDLRESG…AAPGQLSAAE (222 aa). The Proton acceptor; for 3-dehydroquinate dehydratase activity role is filled by histidine 1175. Lysine 1203 functions as the Schiff-base intermediate with substrate; for 3-dehydroquinate dehydratase activity in the catalytic mechanism. A shikimate dehydrogenase region spans residues 1286 to 1571; sequence AKKFAVLGKP…NAVLGTNETK (286 aa).

It in the N-terminal section; belongs to the sugar phosphate cyclases superfamily. Dehydroquinate synthase family. The protein in the 2nd section; belongs to the EPSP synthase family. In the 3rd section; belongs to the shikimate kinase family. This sequence in the 4th section; belongs to the type-I 3-dehydroquinase family. It in the C-terminal section; belongs to the shikimate dehydrogenase family. In terms of assembly, homodimer. Zn(2+) is required as a cofactor.

It localises to the cytoplasm. The catalysed reaction is 7-phospho-2-dehydro-3-deoxy-D-arabino-heptonate = 3-dehydroquinate + phosphate. It carries out the reaction 3-dehydroquinate = 3-dehydroshikimate + H2O. The enzyme catalyses shikimate + NADP(+) = 3-dehydroshikimate + NADPH + H(+). It catalyses the reaction shikimate + ATP = 3-phosphoshikimate + ADP + H(+). The catalysed reaction is 3-phosphoshikimate + phosphoenolpyruvate = 5-O-(1-carboxyvinyl)-3-phosphoshikimate + phosphate. It participates in metabolic intermediate biosynthesis; chorismate biosynthesis; chorismate from D-erythrose 4-phosphate and phosphoenolpyruvate: step 2/7. The protein operates within metabolic intermediate biosynthesis; chorismate biosynthesis; chorismate from D-erythrose 4-phosphate and phosphoenolpyruvate: step 3/7. It functions in the pathway metabolic intermediate biosynthesis; chorismate biosynthesis; chorismate from D-erythrose 4-phosphate and phosphoenolpyruvate: step 4/7. Its pathway is metabolic intermediate biosynthesis; chorismate biosynthesis; chorismate from D-erythrose 4-phosphate and phosphoenolpyruvate: step 5/7. It participates in metabolic intermediate biosynthesis; chorismate biosynthesis; chorismate from D-erythrose 4-phosphate and phosphoenolpyruvate: step 6/7. In terms of biological role, the AROM polypeptide catalyzes 5 consecutive enzymatic reactions in prechorismate polyaromatic amino acid biosynthesis. The protein is Pentafunctional AROM polypeptide 2 of Talaromyces marneffei (strain ATCC 18224 / CBS 334.59 / QM 7333) (Penicillium marneffei).